The chain runs to 435 residues: Apparent malate synthase (435 aa).

2 residues coordinate Mg(2+): E159 and N180. E159 lines the substrate pocket.

This sequence belongs to the HpcH/HpaI aldolase family. Mg(2+) serves as cofactor. Requires Mn(2+) as cofactor. Co(2+) is required as a cofactor. The cofactor is Ca(2+).

The catalysed reaction is (S)-malyl-CoA = glyoxylate + acetyl-CoA. The enzyme catalyses (S)-malyl-CoA + H2O = (S)-malate + CoA + H(+). Functionally, involved in the methylaspartate cycle. Catalyzes the biosynthesis of malate in two steps. In the first reaction acetyl-CoA is condensed reversibly with glyoxylate to form (S)-malyl-CoA. In the second reaction (S)-malyl-CoA is hydrolyzed to malate and CoA. It can also catalyze the condensation of propionyl-CoA with glyoxylate and of acetyl-CoA with pyruvate, however the CoA-ester hydrolysis reaction is highly specific for (S)-malyl-CoA. This Haloarcula marismortui (strain ATCC 43049 / DSM 3752 / JCM 8966 / VKM B-1809) (Halobacterium marismortui) protein is Apparent malate synthase (aceB).